Here is a 274-residue protein sequence, read N- to C-terminus: Thiamine kinase (274 aa).

It belongs to the thiamine kinase family.

It carries out the reaction thiamine + ATP = thiamine phosphate + ADP + H(+). The protein operates within cofactor biosynthesis; thiamine diphosphate biosynthesis; thiamine phosphate from thiamine: step 1/1. Catalyzes the ATP-dependent phosphorylation of thiamine to thiamine phosphate. Is involved in thiamine salvage. This chain is Thiamine kinase, found in Salmonella choleraesuis (strain SC-B67).